The primary structure comprises 321 residues: Lipoyl synthase (321 aa).

7 residues coordinate [4Fe-4S] cluster: Cys-68, Cys-73, Cys-79, Cys-94, Cys-98, Cys-101, and Ser-308. The region spanning 80–297 (FNHGTATFMI…KDVAMGLGFS (218 aa)) is the Radical SAM core domain.

It belongs to the radical SAM superfamily. Lipoyl synthase family. The cofactor is [4Fe-4S] cluster.

The protein localises to the cytoplasm. It catalyses the reaction [[Fe-S] cluster scaffold protein carrying a second [4Fe-4S](2+) cluster] + N(6)-octanoyl-L-lysyl-[protein] + 2 oxidized [2Fe-2S]-[ferredoxin] + 2 S-adenosyl-L-methionine + 4 H(+) = [[Fe-S] cluster scaffold protein] + N(6)-[(R)-dihydrolipoyl]-L-lysyl-[protein] + 4 Fe(3+) + 2 hydrogen sulfide + 2 5'-deoxyadenosine + 2 L-methionine + 2 reduced [2Fe-2S]-[ferredoxin]. It functions in the pathway protein modification; protein lipoylation via endogenous pathway; protein N(6)-(lipoyl)lysine from octanoyl-[acyl-carrier-protein]: step 2/2. In terms of biological role, catalyzes the radical-mediated insertion of two sulfur atoms into the C-6 and C-8 positions of the octanoyl moiety bound to the lipoyl domains of lipoate-dependent enzymes, thereby converting the octanoylated domains into lipoylated derivatives. This is Lipoyl synthase from Aeromonas hydrophila subsp. hydrophila (strain ATCC 7966 / DSM 30187 / BCRC 13018 / CCUG 14551 / JCM 1027 / KCTC 2358 / NCIMB 9240 / NCTC 8049).